Reading from the N-terminus, the 32-residue chain is Delta-conotoxin-like CnVIB (32 aa).

Intrachain disulfides connect cysteine 3–cysteine 18, cysteine 10–cysteine 22, and cysteine 17–cysteine 27. Proline 6 and proline 14 each carry 4-hydroxyproline.

This sequence belongs to the conotoxin O1 superfamily. As to expression, expressed by the venom duct.

Its subcellular location is the secreted. Functionally, delta-conotoxins bind to site 6 of voltage-gated sodium channels (Nav) and inhibit the inactivation process. This toxin acts on Nav1.4/SCN4A and Nav1.6/SCN8A (EC(50)=2.3 uM). In Conus consors (Singed cone), this protein is Delta-conotoxin-like CnVIB.